The chain runs to 176 residues: Glutathione-regulated potassium-efflux system ancillary protein KefF (176 aa).

FMN-binding positions include His8, Ser14 to Asn17, Met65 to Tyr68, and Thr105 to Gly108.

Belongs to the NAD(P)H dehydrogenase (quinone) family. KefF subfamily. Homodimer. Interacts with KefC. Requires FMN as cofactor.

It localises to the cell inner membrane. The catalysed reaction is a quinone + NADH + H(+) = a quinol + NAD(+). It catalyses the reaction a quinone + NADPH + H(+) = a quinol + NADP(+). Functionally, regulatory subunit of a potassium efflux system that confers protection against electrophiles. Required for full activity of KefC. Shows redox enzymatic activity, but this enzymatic activity is not required for activation of KefC. In Salmonella dublin (strain CT_02021853), this protein is Glutathione-regulated potassium-efflux system ancillary protein KefF.